Here is a 368-residue protein sequence, read N- to C-terminus: Tetraacyldisaccharide 4'-kinase (368 aa).

An ATP-binding site is contributed by 66–73; that stretch reads TVGGTGKT.

This sequence belongs to the LpxK family.

The enzyme catalyses a lipid A disaccharide + ATP = a lipid IVA + ADP + H(+). Its pathway is glycolipid biosynthesis; lipid IV(A) biosynthesis; lipid IV(A) from (3R)-3-hydroxytetradecanoyl-[acyl-carrier-protein] and UDP-N-acetyl-alpha-D-glucosamine: step 6/6. Its function is as follows. Transfers the gamma-phosphate of ATP to the 4'-position of a tetraacyldisaccharide 1-phosphate intermediate (termed DS-1-P) to form tetraacyldisaccharide 1,4'-bis-phosphate (lipid IVA). This Desulfatibacillum aliphaticivorans protein is Tetraacyldisaccharide 4'-kinase.